Here is a 387-residue protein sequence, read N- to C-terminus: 8-amino-7-oxononanoate synthase (387 aa).

2 residues coordinate substrate: R31 and R38. 118 to 119 (GY) is a pyridoxal 5'-phosphate binding site. H143 contributes to the substrate binding site. Residues S191, 216 to 219 (DDAH), and 236 to 239 (TLSK) each bind pyridoxal 5'-phosphate. K239 is modified (N6-(pyridoxal phosphate)lysine). A substrate-binding site is contributed by T348.

This sequence belongs to the class-II pyridoxal-phosphate-dependent aminotransferase family. BioF subfamily. As to quaternary structure, homodimer. Pyridoxal 5'-phosphate is required as a cofactor.

The catalysed reaction is 6-carboxyhexanoyl-[ACP] + L-alanine + H(+) = (8S)-8-amino-7-oxononanoate + holo-[ACP] + CO2. It participates in cofactor biosynthesis; biotin biosynthesis. Functionally, catalyzes the decarboxylative condensation of pimeloyl-[acyl-carrier protein] and L-alanine to produce 8-amino-7-oxononanoate (AON), [acyl-carrier protein], and carbon dioxide. This Methylorubrum populi (strain ATCC BAA-705 / NCIMB 13946 / BJ001) (Methylobacterium populi) protein is 8-amino-7-oxononanoate synthase.